The following is a 480-amino-acid chain: Endoplasmic reticulum lectin 1 (480 aa).

Residues 1-27 (MRRSDRFPCAGASLLVVLCGVFPSSFG) form the signal peptide. 2 consecutive MRH domains span residues 108 to 245 (SSCS…LCNH) and 339 to 466 (SYCF…ICKI). Cysteines 110 and 123 form a disulfide. Residues 152–172 (VKKSPSEAGENQEDKERTEGH) form a disordered region. Basic and acidic residues predominate over residues 163–172 (QEDKERTEGH). Disulfide bonds link cysteine 198–cysteine 231, cysteine 214–cysteine 243, cysteine 341–cysteine 354, cysteine 418–cysteine 452, and cysteine 433–cysteine 464.

It is found in the endoplasmic reticulum lumen. In terms of biological role, probable lectin that binds selectively to improperly folded lumenal proteins. May function in endoplasmic reticulum quality control and endoplasmic reticulum-associated degradation (ERAD) of both non-glycosylated proteins and glycoproteins. The chain is Endoplasmic reticulum lectin 1 (erlec1) from Xenopus laevis (African clawed frog).